The primary structure comprises 119 residues: Fluoride-specific ion channel FluC 2 (119 aa).

4 helical membrane-spanning segments follow: residues 1-21, 33-53, 56-76, and 93-113; these read MITVLTAGFGAIWGAILRYGI, FPYATLLINLTGAFLLGFIFS, FSPFIYALIGTGVLGGYTTFS, and VFTLYALLSYGGGLILVFLGY. The Na(+) site is built by G70 and T73.

It belongs to the fluoride channel Fluc/FEX (TC 1.A.43) family.

Its subcellular location is the cell membrane. It carries out the reaction fluoride(in) = fluoride(out). Its activity is regulated as follows. Na(+) is not transported, but it plays an essential structural role and its presence is essential for fluoride channel function. In terms of biological role, fluoride-specific ion channel. Important for reducing fluoride concentration in the cell, thus reducing its toxicity. The sequence is that of Fluoride-specific ion channel FluC 2 from Lactobacillus johnsonii (strain CNCM I-12250 / La1 / NCC 533).